The sequence spans 324 residues: Rho crystallin (324 aa).

Residue T2 is modified to N-acetylthreonine. 218 to 281 (SVLGSHRDRN…SFTPARIKQN (64 aa)) serves as a coordination point for NADP(+).

It belongs to the aldo/keto reductase family. In terms of assembly, monomer.

The sequence is that of Rho crystallin from Rana temporaria (European common frog).